Here is a 420-residue protein sequence, read N- to C-terminus: L-cysteine:1D-myo-inositol 2-amino-2-deoxy-alpha-D-glucopyranoside ligase (420 aa).

Position 46 (Cys-46) interacts with Zn(2+). Residues 46 to 49 (CGIT), Thr-61, and 84 to 86 (NVT) contribute to the L-cysteinyl-5'-AMP site. The 'HIGH' region signature appears at 48 to 58 (ITPYDSTHLGH). Residues 194 to 199 (ERGGDP) carry the 'ERGGDP' region motif. Trp-235 is an L-cysteinyl-5'-AMP binding site. Cys-239 lines the Zn(2+) pocket. Residue 257 to 259 (GTD) coordinates L-cysteinyl-5'-AMP. Zn(2+) is bound at residue His-264. Position 291 (Val-291) interacts with L-cysteinyl-5'-AMP. Residues 297–301 (KMSKS) carry the 'KMSKS' region motif.

The protein belongs to the class-I aminoacyl-tRNA synthetase family. MshC subfamily. In terms of assembly, monomer. It depends on Zn(2+) as a cofactor.

It carries out the reaction 1D-myo-inositol 2-amino-2-deoxy-alpha-D-glucopyranoside + L-cysteine + ATP = 1D-myo-inositol 2-(L-cysteinylamino)-2-deoxy-alpha-D-glucopyranoside + AMP + diphosphate + H(+). In terms of biological role, catalyzes the ATP-dependent condensation of GlcN-Ins and L-cysteine to form L-Cys-GlcN-Ins. The sequence is that of L-cysteine:1D-myo-inositol 2-amino-2-deoxy-alpha-D-glucopyranoside ligase from Beutenbergia cavernae (strain ATCC BAA-8 / DSM 12333 / CCUG 43141 / JCM 11478 / NBRC 16432 / NCIMB 13614 / HKI 0122).